Consider the following 708-residue polypeptide: Exocyst complex component 8 (708 aa).

The 101-residue stretch at 168 to 268 (YLVYNGDLLE…WLEVLEETKR (101 aa)) folds into the PH domain. Residues 271–282 (ALSEKRRLEQEA) show a composition bias toward basic and acidic residues. The tract at residues 271 to 314 (ALSEKRRLEQEALPRPAPTPPESTNPFEEEEEEEEEPSAEEEAV) is disordered. Acidic residues predominate over residues 297-314 (FEEEEEEEEEPSAEEEAV).

Belongs to the EXO84 family. In terms of assembly, the exocyst complex is composed of EXOC1, EXOC2, EXOC3, EXOC4, EXOC5, EXOC6, EXOC7 and EXOC8.

Its subcellular location is the cytoplasm. It localises to the perinuclear region. It is found in the cell projection. The protein localises to the growth cone. Component of the exocyst complex involved in the docking of exocytic vesicles with fusion sites on the plasma membrane. This is Exocyst complex component 8 (EXOC8) from Gallus gallus (Chicken).